Reading from the N-terminus, the 271-residue chain is Probable ribosomal RNA small subunit methyltransferase A (271 aa).

Positions 12, 37, 58, 83, and 100 each coordinate S-adenosyl-L-methionine.

It belongs to the class I-like SAM-binding methyltransferase superfamily. rRNA adenine N(6)-methyltransferase family. RsmA subfamily.

It is found in the cytoplasm. Functionally, specifically dimethylates two adjacent adenosines in the loop of a conserved hairpin near the 3'-end of 16S rRNA in the 30S particle. May play a critical role in biogenesis of 30S subunits. The chain is Probable ribosomal RNA small subunit methyltransferase A from Methanococcus aeolicus (strain ATCC BAA-1280 / DSM 17508 / OCM 812 / Nankai-3).